The primary structure comprises 141 residues: Hemoglobin subunit alpha-D (141 aa).

Residues 1-141 (MLTAEDKKLI…VAAVLAEKYR (141 aa)) form the Globin domain. Residues H58 and H87 each coordinate heme b.

The protein belongs to the globin family. In terms of assembly, heterotetramer of two alpha-D chains and two beta chains. In terms of tissue distribution, red blood cells.

Involved in oxygen transport from the lung to the various peripheral tissues. The sequence is that of Hemoglobin subunit alpha-D (HBAD) from Apus apus (Common swift).